The chain runs to 285 residues: Flagellar filament core protein flaB2 (285 aa).

Belongs to the bacterial flagellin family. In terms of assembly, the flagellum consists of an outer layer composed of two sheath proteins, flaA1 (44 kDa) and flaA2 (35 kDa) around a core that contains three proteins flaB1 (37 kDa), flaB2 (34 kDa) and flaB3 (32 kDa).

It localises to the periplasmic flagellum. Its subcellular location is the periplasm. Functionally, component of the core of the flagella. This chain is Flagellar filament core protein flaB2 (flaB2), found in Brachyspira hyodysenteriae (Treponema hyodysenteriae).